The sequence spans 441 residues: Zinc finger and BTB domain-containing protein 8A (441 aa).

Residues 24-92 (CDCSILVEGK…VYSGKLSLTG (69 aa)) form the BTB domain. Polar residues-rich tracts occupy residues 146 to 170 (ERSS…SPDQ) and 178 to 197 (KSWS…QQPL). Residues 146-252 (ERSSFYSSGW…SEEQAQMNAE (107 aa)) are disordered. A phosphoserine mark is found at S161 and S167. Residues K178, K182, and K199 each participate in a glycyl lysine isopeptide (Lys-Gly) (interchain with G-Cter in SUMO2) cross-link. The span at 198–208 (TKHEQRKDSIK) shows a compositional bias: basic and acidic residues. Positions 234–248 (SDSSSHASQSEEQAQ) are enriched in low complexity. 2 C2H2-type zinc fingers span residues 282 to 304 (FKCP…LRCH) and 310 to 333 (YPCQ…RTIH). K437 participates in a covalent cross-link: Glycyl lysine isopeptide (Lys-Gly) (interchain with G-Cter in SUMO2).

It localises to the nucleus. In terms of biological role, may be involved in transcriptional regulation. This chain is Zinc finger and BTB domain-containing protein 8A (ZBTB8A), found in Bos taurus (Bovine).